We begin with the raw amino-acid sequence, 324 residues long: MQDFLALTLQGEQPATREGKQANFSWRWLGEGLLECTPHAQYDKAVVLSAGVHGNETAPIELLSHLCTDLFAGRLKLAVRLLLVLGNPYAMRQGKRYVHDDVNRMFCGGYKNLPVTEESKRAEVLEQTVATFFQESSSQAKRYHYDLHTAIRASLLPTFALFPYQTHGYDADLTASLEAADLDALVYHNALGKTFTHFTSENFKAASATLELGKALPFGQNDLSQFASIDEVIRNVVSEQALPVRNKPKIRVFQVSDSLIKKDEEFHMNLSAEAPNFSTFTKGEIIATQPSGNYVVEQDQVWILFPNPNVKIGLRAGLVLTETI.

Residues His-53, Glu-56, and His-148 each coordinate Zn(2+). Glu-211 is an active-site residue.

This sequence belongs to the AspA/AstE family. Succinylglutamate desuccinylase subfamily. Zn(2+) serves as cofactor.

The enzyme catalyses N-succinyl-L-glutamate + H2O = L-glutamate + succinate. It functions in the pathway amino-acid degradation; L-arginine degradation via AST pathway; L-glutamate and succinate from L-arginine: step 5/5. Functionally, transforms N(2)-succinylglutamate into succinate and glutamate. This is Succinylglutamate desuccinylase from Acinetobacter baumannii (strain AB0057).